We begin with the raw amino-acid sequence, 803 residues long: Exo-1,4-beta-xylosidase xlnD (803 aa).

The signal sequence occupies residues 1-18 (MRSLISVAVLSALPTAFS). N-linked (GlcNAc...) asparagine glycosylation is found at N21, N44, N85, N122, N140, and N234. D307 is a catalytic residue. N-linked (GlcNAc...) asparagine glycans are attached at residues N437, N474, N515, N611, N676, and N698.

It belongs to the glycosyl hydrolase 3 family.

The protein localises to the secreted. It carries out the reaction Hydrolysis of (1-&gt;4)-beta-D-xylans, to remove successive D-xylose residues from the non-reducing termini.. It functions in the pathway glycan degradation; xylan degradation. Xylan 1,4-beta-xylosidase involved in the hydrolysis of xylan, a major structural heterogeneous polysaccharide found in plant biomass representing the second most abundant polysaccharide in the biosphere, after cellulose. This Emericella nidulans (strain FGSC A4 / ATCC 38163 / CBS 112.46 / NRRL 194 / M139) (Aspergillus nidulans) protein is Exo-1,4-beta-xylosidase xlnD (xlnD).